A 2053-amino-acid chain; its full sequence is Cell adhesion molecule DSCAML1 (2053 aa).

Positions 1–18 (MWLVTFLLLLDSLHKARP) are cleaved as a signal peptide. Ig-like C2-type domains follow at residues 19-119 (EDVG…NIRV), 115-217 (PNIR…ARLS), 226-306 (PTIL…AEAT), 314-402 (PLHV…AIIA), 408-501 (PRIV…ARIN), 506-586 (PSIR…LSIS), 596-685 (PPLI…RQLI), 690-784 (PRFV…MFLT), and 788-885 (PAMI…LTVQ). Over 19–1591 (EDVGTSLYFV…AQGEGDDVKK (1573 aa)) the chain is Extracellular. Asn29 and Asn79 each carry an N-linked (GlcNAc...) asparagine glycan. Disulfide bonds link Cys47–Cys103, Cys146–Cys198, Cys247–Cys294, Cys336–Cys386, and Cys429–Cys485. Asn368, Asn471, Asn513, Asn556, Asn666, Asn710, Asn749, Asn796, and Asn809 each carry an N-linked (GlcNAc...) asparagine glycan. 2 disulfide bridges follow: Cys526–Cys575 and Cys617–Cys669. Cys711 and Cys767 are oxidised to a cystine. Cys810 and Cys867 are joined by a disulfide. Fibronectin type-III domains follow at residues 887–984 (PPDP…TEEA), 989–1088 (PPMD…TLED), 1093–1189 (PPEN…TKED), and 1193–1288 (PPAG…AGKA). N-linked (GlcNAc...) asparagine glycans are attached at residues Asn926, Asn1082, Asn1144, Asn1162, Asn1275, and Asn1345. The Ig-like C2-type 10 domain occupies 1278-1377 (EKVTIEPAGK…TGGFDTIIVN (100 aa)). Cysteines 1311 and 1363 form a disulfide. 2 consecutive Fibronectin type-III domains span residues 1383-1477 (PPDQ…THGR) and 1478-1578 (EPSF…TIPP). N-linked (GlcNAc...) asparagine glycans are attached at residues Asn1492, Asn1531, and Asn1561. The chain crosses the membrane as a helical span at residues 1592-1612 (LFTIGCPVILATLGVALLFIV). At 1613 to 2053 (RKKRKEKRLK…GAYSKSYTLV (441 aa)) the chain is on the cytoplasmic side. Disordered regions lie at residues 1715–1741 (PLIDMSDIRPGTNPVSRKNVKSAHSTR), 1773–1803 (HGVTVTESDSYSASLSQDTDKGRNSMVSTES), 1840–1862 (SSDQMTTGTNENADSMTSMSTPS), and 1974–2053 (LAMP…YTLV). The segment covering 1732 to 1741 (KNVKSAHSTR) has biased composition (basic residues). Residues 1773-1789 (HGVTVTESDSYSASLSQ) show a composition bias toward polar residues. Residues 1977-2009 (PAPPAGTAPPAPGPTPAEPPTAPSAAPPAPSTE) show a composition bias toward pro residues. Over residues 2029-2041 (EMSTSGVGRSQKQ) the composition is skewed to polar residues.

In terms of assembly, homodimer; mediates homophilic interactions to promote cell adhesion. Detected in heart, liver, pancreas, skeletal muscle, kidney and in brain, in particular in the amygdala, caudate nucleus, corpus callosum, hippocampus, substantia nigra, thalamus and subthalamus.

Its subcellular location is the cell membrane. The protein resides in the synapse. Functionally, cell adhesion molecule that plays a role in neuronal self-avoidance. Promotes repulsion between specific neuronal processes of either the same cell or the same subtype of cells. Promotes both isoneuronal self-avoidance for creating an orderly neurite arborization in retinal rod bipolar cells and heteroneuronal self-avoidance to maintain mosaic spacing between AII amacrine cells. Adhesion molecule that promotes lamina-specific synaptic connections in the retina: expressed in specific subsets of interneurons and retinal ganglion cells (RGCs) and promotes synaptic connectivity via homophilic interactions. The chain is Cell adhesion molecule DSCAML1 (DSCAML1) from Homo sapiens (Human).